The sequence spans 180 residues: Hypoxanthine-guanine phosphoribosyltransferase (180 aa).

Positions 43 and 44 each coordinate diphosphate. Glu99 and Asp100 together coordinate Mg(2+). Asp103 serves as the catalytic Proton acceptor. Residues Lys131, 152–153 (FV), and Asp159 each bind GMP. Arg165 contributes to the diphosphate binding site.

This sequence belongs to the purine/pyrimidine phosphoribosyltransferase family. Mg(2+) serves as cofactor.

It is found in the cytoplasm. The enzyme catalyses IMP + diphosphate = hypoxanthine + 5-phospho-alpha-D-ribose 1-diphosphate. The catalysed reaction is GMP + diphosphate = guanine + 5-phospho-alpha-D-ribose 1-diphosphate. Its pathway is purine metabolism; IMP biosynthesis via salvage pathway; IMP from hypoxanthine: step 1/1. It participates in purine metabolism; GMP biosynthesis via salvage pathway; GMP from guanine: step 1/1. Purine salvage pathway enzyme that catalyzes the transfer of the ribosyl-5-phosphate group from 5-phospho-alpha-D-ribose 1-diphosphate (PRPP) to the N9 position of the 6-oxopurines hypoxanthine and guanine to form the corresponding ribonucleotides IMP (inosine 5'-monophosphate) and GMP (guanosine 5'-monophosphate), with the release of PPi. This is Hypoxanthine-guanine phosphoribosyltransferase (hpt) from Streptococcus pneumoniae serotype 4 (strain ATCC BAA-334 / TIGR4).